A 611-amino-acid polypeptide reads, in one-letter code: DNA mismatch repair protein MutL (611 aa).

This sequence belongs to the DNA mismatch repair MutL/HexB family.

Functionally, this protein is involved in the repair of mismatches in DNA. It is required for dam-dependent methyl-directed DNA mismatch repair. May act as a 'molecular matchmaker', a protein that promotes the formation of a stable complex between two or more DNA-binding proteins in an ATP-dependent manner without itself being part of a final effector complex. This Borreliella afzelii (strain PKo) (Borrelia afzelii) protein is DNA mismatch repair protein MutL.